Here is a 246-residue protein sequence, read N- to C-terminus: MNHSSNEKEPETIEPLRYLSKTEVATVETELLRDYRFGQQQLIEIWGHACAIAITKAFPLSSLSKKQPTLLVVCGPEQNGSIGLVCARHLRMFEYEPTIFYPKRSTLGLHQDFTVQCEKMDIPFLSYLPTEVQLLNDAYNLVIDAILGPETDHKDVKEPYAGMLVTLKQVKIPIVSVDVPSGWDADEPAKDGINPEVLISLTAPKKCATGFSGKHFLAGRFLPYDIQKKYELNLPEFPGTECIIEL.

A YjeF N-terminal domain is found at 24–234 (VATVETELLR…DIQKKYELNL (211 aa)).

As to quaternary structure, interacts with apoa1a. Binds to high-density lipoprotein.

In terms of biological role, accelerates cholesterol efflux from endothelial cells to high-density lipoprotein (HDL) and thereby regulates angiogenesis. Orchestrates hematopoietic stem and progenitor cell emergence from the hemogenic endothelium, a type of specialized endothelium manifesting hematopoietic potential. YJEFN3-mediated cholesterol efflux activates endothelial SREBF2, the master transcription factor for cholesterol biosynthesis, which in turn transactivates NOTCH and promotes hematopoietic stem and progenitor cell emergence. This is YjeF N-terminal domain-containing 3 from Danio rerio (Zebrafish).